Reading from the N-terminus, the 146-residue chain is Snaclec 1 (146 aa).

The signal sequence occupies residues 1 to 23; it reads MGRFIFISFGLLVVFLSLSGTEA. Intrachain disulfides connect Cys-25–Cys-36, Cys-53–Cys-142, and Cys-119–Cys-134. Positions 32-143 constitute a C-type lectin domain; sequence YEGHCYRVFD…CRNYGHFVCK (112 aa).

Belongs to the snaclec family. As to quaternary structure, heterodimer; disulfide-linked. In terms of tissue distribution, expressed by the venom gland.

It is found in the secreted. Interferes with one step of hemostasis (modulation of platelet aggregation, or coagulation cascade, for example). This is Snaclec 1 from Bitis arietans (African puff adder).